Reading from the N-terminus, the 371-residue chain is Leu/Ile/Val-binding protein homolog 1 (371 aa).

An N-terminal signal peptide occupies residues 1 to 23; that stretch reads MRKTLFSGVALAAVIAFGGSAWA.

Belongs to the leucine-binding protein family.

Its function is as follows. Component of an amino-acid transport system. This Brucella suis biovar 1 (strain 1330) protein is Leu/Ile/Val-binding protein homolog 1.